We begin with the raw amino-acid sequence, 92 residues long: RIIa domain-containing protein 1 (92 aa).

The RIIa domain occupies 43–77 (KEVELLISGFFREMFLKRPDNIPEFAADYFTDPRL).

This Bos taurus (Bovine) protein is RIIa domain-containing protein 1 (RIIAD1).